Reading from the N-terminus, the 84-residue chain is Mu-conotoxin-like Cal 12.2d (84 aa).

Residues methionine 1–leucine 19 form the signal peptide. The propeptide occupies isoleucine 20–arginine 42. Tryptophan 72 is modified (6'-bromotryptophan). Proline 77 is subject to 4-hydroxyproline. Tryptophan 81 carries the 6'-bromotryptophan modification.

This sequence belongs to the conotoxin O1 superfamily. Contains 4 disulfide bonds. As to expression, expressed by the venom duct.

The protein resides in the secreted. Mu-conotoxins block voltage-gated sodium channels. This toxin reversibly blocks voltage-gated sodium channel in cephalopods, with no alteration in the voltage dependence of sodium conductance or on the kinetics of inactivation. The chain is Mu-conotoxin-like Cal 12.2d from Californiconus californicus (California cone).